The chain runs to 280 residues: Fructose-1,6-bisphosphatase/inositol-1-monophosphatase (280 aa).

Positions 73, 94, 96, and 97 each coordinate Mg(2+). Residues 97 to 99, Arg-195, Val-200, and Arg-219 contribute to the substrate site; that span reads DGT. Asp-226 contacts Mg(2+).

The protein belongs to the inositol monophosphatase superfamily. FBPase class 4 family. It depends on Mg(2+) as a cofactor.

It catalyses the reaction beta-D-fructose 1,6-bisphosphate + H2O = beta-D-fructose 6-phosphate + phosphate. The catalysed reaction is a myo-inositol phosphate + H2O = myo-inositol + phosphate. Phosphatase with broad specificity; it can dephosphorylate fructose 1,6-bisphosphate, and both D and L isomers of inositol-1-phosphate (I-1-P). The sequence is that of Fructose-1,6-bisphosphatase/inositol-1-monophosphatase (suhB) from Methanothermobacter thermautotrophicus (strain ATCC 29096 / DSM 1053 / JCM 10044 / NBRC 100330 / Delta H) (Methanobacterium thermoautotrophicum).